The sequence spans 165 residues: Nucleotide-binding protein P9211_04811 (165 aa).

The protein belongs to the YajQ family.

In terms of biological role, nucleotide-binding protein. In Prochlorococcus marinus (strain MIT 9211), this protein is Nucleotide-binding protein P9211_04811.